The primary structure comprises 236 residues: 2-C-methyl-D-erythritol 4-phosphate cytidylyltransferase (236 aa).

This sequence belongs to the IspD/TarI cytidylyltransferase family. IspD subfamily.

The enzyme catalyses 2-C-methyl-D-erythritol 4-phosphate + CTP + H(+) = 4-CDP-2-C-methyl-D-erythritol + diphosphate. Its pathway is isoprenoid biosynthesis; isopentenyl diphosphate biosynthesis via DXP pathway; isopentenyl diphosphate from 1-deoxy-D-xylulose 5-phosphate: step 2/6. Catalyzes the formation of 4-diphosphocytidyl-2-C-methyl-D-erythritol from CTP and 2-C-methyl-D-erythritol 4-phosphate (MEP). In Paraburkholderia phymatum (strain DSM 17167 / CIP 108236 / LMG 21445 / STM815) (Burkholderia phymatum), this protein is 2-C-methyl-D-erythritol 4-phosphate cytidylyltransferase.